A 258-amino-acid chain; its full sequence is Phosphonates import ATP-binding protein PhnC 1 (258 aa).

An ABC transporter domain is found at 2–246 (IEFKDVGLVY…TFEEIYGRSI (245 aa)). Residue 35–42 (GLSGAGKS) participates in ATP binding.

This sequence belongs to the ABC transporter superfamily. Phosphonates importer (TC 3.A.1.9.1) family. The complex is composed of two ATP-binding proteins (PhnC), two transmembrane proteins (PhnE) and a solute-binding protein (PhnD).

The protein resides in the cell membrane. It catalyses the reaction phosphonate(out) + ATP + H2O = phosphonate(in) + ADP + phosphate + H(+). Its function is as follows. Part of the ABC transporter complex PhnCDE involved in phosphonates import. Responsible for energy coupling to the transport system. The sequence is that of Phosphonates import ATP-binding protein PhnC 1 from Oceanobacillus iheyensis (strain DSM 14371 / CIP 107618 / JCM 11309 / KCTC 3954 / HTE831).